A 486-amino-acid chain; its full sequence is Galactose-1-phosphate uridylyltransferase (486 aa).

The protein belongs to the galactose-1-phosphate uridylyltransferase type 2 family.

It localises to the cytoplasm. The enzyme catalyses alpha-D-galactose 1-phosphate + UDP-alpha-D-glucose = alpha-D-glucose 1-phosphate + UDP-alpha-D-galactose. It functions in the pathway carbohydrate metabolism; galactose metabolism. This Lacticaseibacillus casei (strain BL23) (Lactobacillus casei) protein is Galactose-1-phosphate uridylyltransferase.